The sequence spans 105 residues: Small ribosomal subunit protein uS10 (105 aa).

The protein belongs to the universal ribosomal protein uS10 family. Part of the 30S ribosomal subunit.

Functionally, involved in the binding of tRNA to the ribosomes. This is Small ribosomal subunit protein uS10 from Synechococcus sp. (strain JA-3-3Ab) (Cyanobacteria bacterium Yellowstone A-Prime).